Reading from the N-terminus, the 342-residue chain is Aspartate carbamoyltransferase catalytic subunit (342 aa).

2 residues coordinate carbamoyl phosphate: Arg54 and Thr55. Lys82 is an L-aspartate binding site. Carbamoyl phosphate contacts are provided by Arg104, His134, and Gln137. Residues Arg177 and Arg232 each coordinate L-aspartate. Residues Gly277 and Pro278 each coordinate carbamoyl phosphate.

The protein belongs to the aspartate/ornithine carbamoyltransferase superfamily. ATCase family. In terms of assembly, heterododecamer (2C3:3R2) of six catalytic PyrB chains organized as two trimers (C3), and six regulatory PyrI chains organized as three dimers (R2).

It carries out the reaction carbamoyl phosphate + L-aspartate = N-carbamoyl-L-aspartate + phosphate + H(+). It functions in the pathway pyrimidine metabolism; UMP biosynthesis via de novo pathway; (S)-dihydroorotate from bicarbonate: step 2/3. In terms of biological role, catalyzes the condensation of carbamoyl phosphate and aspartate to form carbamoyl aspartate and inorganic phosphate, the committed step in the de novo pyrimidine nucleotide biosynthesis pathway. The chain is Aspartate carbamoyltransferase catalytic subunit from Pseudarthrobacter chlorophenolicus (strain ATCC 700700 / DSM 12829 / CIP 107037 / JCM 12360 / KCTC 9906 / NCIMB 13794 / A6) (Arthrobacter chlorophenolicus).